Reading from the N-terminus, the 226-residue chain is Histidine biosynthesis bifunctional protein HisIE (226 aa).

The phosphoribosyl-AMP cyclohydrolase stretch occupies residues 1 to 131 (MMPMNQEFIQ…STFNRPLSNT (131 aa)). The interval 132–226 (CSELFEVIKD…KRRQSKSNPK (95 aa)) is phosphoribosyl-ATP pyrophosphohydrolase.

The protein in the N-terminal section; belongs to the PRA-CH family. In the C-terminal section; belongs to the PRA-PH family.

The protein localises to the cytoplasm. It carries out the reaction 1-(5-phospho-beta-D-ribosyl)-ATP + H2O = 1-(5-phospho-beta-D-ribosyl)-5'-AMP + diphosphate + H(+). The catalysed reaction is 1-(5-phospho-beta-D-ribosyl)-5'-AMP + H2O = 1-(5-phospho-beta-D-ribosyl)-5-[(5-phospho-beta-D-ribosylamino)methylideneamino]imidazole-4-carboxamide. It participates in amino-acid biosynthesis; L-histidine biosynthesis; L-histidine from 5-phospho-alpha-D-ribose 1-diphosphate: step 2/9. Its pathway is amino-acid biosynthesis; L-histidine biosynthesis; L-histidine from 5-phospho-alpha-D-ribose 1-diphosphate: step 3/9. In Prochlorococcus marinus (strain SARG / CCMP1375 / SS120), this protein is Histidine biosynthesis bifunctional protein HisIE.